Here is a 372-residue protein sequence, read N- to C-terminus: Glutamate 5-kinase (372 aa).

Position 14 (lysine 14) interacts with ATP. Substrate is bound by residues serine 54, aspartate 141, and asparagine 153. Position 173 to 174 (173 to 174 (TD)) interacts with ATP. A PUA domain is found at 280–358 (RGHVVIDDGA…GEIESVLGYM (79 aa)).

The protein belongs to the glutamate 5-kinase family.

The protein localises to the cytoplasm. The catalysed reaction is L-glutamate + ATP = L-glutamyl 5-phosphate + ADP. It participates in amino-acid biosynthesis; L-proline biosynthesis; L-glutamate 5-semialdehyde from L-glutamate: step 1/2. In terms of biological role, catalyzes the transfer of a phosphate group to glutamate to form L-glutamate 5-phosphate. This is Glutamate 5-kinase from Paraburkholderia phytofirmans (strain DSM 17436 / LMG 22146 / PsJN) (Burkholderia phytofirmans).